The following is a 179-amino-acid chain: Cell division protein SepF (179 aa).

The disordered stretch occupies residues 22–55 (LPYEKRDEPVFTSVNSSQEPALPMNQPSQSAGTK). Polar residues predominate over residues 33–55 (TSVNSSQEPALPMNQPSQSAGTK).

Belongs to the SepF family. As to quaternary structure, homodimer. Interacts with FtsZ.

It localises to the cytoplasm. Cell division protein that is part of the divisome complex and is recruited early to the Z-ring. Probably stimulates Z-ring formation, perhaps through the cross-linking of FtsZ protofilaments. Its function overlaps with FtsA. This is Cell division protein SepF from Streptococcus pneumoniae (strain Taiwan19F-14).